The primary structure comprises 99 residues: Large ribosomal subunit protein uL23 (99 aa).

This sequence belongs to the universal ribosomal protein uL23 family. As to quaternary structure, part of the 50S ribosomal subunit. Contacts protein L29, and trigger factor when it is bound to the ribosome.

One of the early assembly proteins it binds 23S rRNA. One of the proteins that surrounds the polypeptide exit tunnel on the outside of the ribosome. Forms the main docking site for trigger factor binding to the ribosome. The protein is Large ribosomal subunit protein uL23 of Shewanella loihica (strain ATCC BAA-1088 / PV-4).